The primary structure comprises 572 residues: Proline--tRNA ligase (572 aa).

It belongs to the class-II aminoacyl-tRNA synthetase family. ProS type 1 subfamily. As to quaternary structure, homodimer.

The protein localises to the cytoplasm. The catalysed reaction is tRNA(Pro) + L-proline + ATP = L-prolyl-tRNA(Pro) + AMP + diphosphate. Catalyzes the attachment of proline to tRNA(Pro) in a two-step reaction: proline is first activated by ATP to form Pro-AMP and then transferred to the acceptor end of tRNA(Pro). As ProRS can inadvertently accommodate and process non-cognate amino acids such as alanine and cysteine, to avoid such errors it has two additional distinct editing activities against alanine. One activity is designated as 'pretransfer' editing and involves the tRNA(Pro)-independent hydrolysis of activated Ala-AMP. The other activity is designated 'posttransfer' editing and involves deacylation of mischarged Ala-tRNA(Pro). The misacylated Cys-tRNA(Pro) is not edited by ProRS. This Caldicellulosiruptor bescii (strain ATCC BAA-1888 / DSM 6725 / KCTC 15123 / Z-1320) (Anaerocellum thermophilum) protein is Proline--tRNA ligase.